We begin with the raw amino-acid sequence, 1079 residues long: BRD4-interacting chromatin-remodeling complex-associated protein-like (1079 aa).

2 disordered regions span residues 51 to 79 (NSSN…LPLS) and 509 to 604 (LHLS…TPGT). Residues 68–79 (LGEGPSDGLPLS) are compositionally biased toward low complexity. Polar residues predominate over residues 544–576 (SSASTAHPSLGSAVQSGSSGSNFTGDQLTQPNR). Residues 590 to 604 (SSSKSTSTFSNTPGT) are compositionally biased toward low complexity. Ser623 is subject to Phosphoserine. Disordered regions lie at residues 669 to 691 (EKVV…GGQK), 837 to 877 (TQFG…NHDQ), and 917 to 954 (TSEE…TESK). Basic and acidic residues-rich tracts occupy residues 918–928 (SEEKASRREPL) and 938–952 (EGHR…HGTE). Ser980 carries the post-translational modification Phosphoserine.

In terms of assembly, component of the multiprotein chromatin-remodeling complexes SWI/SNF: SWI/SNF-A (BAF), SWI/SNF-B (PBAF) and related complexes. The canonical complex contains a catalytic subunit (either SMARCA4/BRG1/BAF190A or SMARCA2/BRM/BAF190B) and at least SMARCE1, ACTL6A/BAF53, SMARCC1/BAF155, SMARCC2/BAF170, and SMARCB1/SNF5/BAF47. Other subunits specific to each of the complexes may also be present permitting several possible combinations developmentally and tissue specific. Component of the SWI/SNF (GBAF) subcomplex, which includes at least BICRA or BICRAL (mutually exclusive), BRD9, SS18, the core BAF subunits, SMARCA2/BRM, SMARCA4/BRG1/BAF190A, ACTL6A/BAF53, SMARCC1/BAF155, and SMARCD1/BAF60A.

In terms of biological role, component of SWI/SNF chromatin remodeling subcomplex GBAF that carries out key enzymatic activities, changing chromatin structure by altering DNA-histone contacts within a nucleosome in an ATP-dependent manner. This Homo sapiens (Human) protein is BRD4-interacting chromatin-remodeling complex-associated protein-like.